Here is a 372-residue protein sequence, read N- to C-terminus: Glutamate 5-kinase (372 aa).

Position 14 (Lys14) interacts with ATP. Substrate contacts are provided by Ser54, Asp141, and Asn153. 173–174 contributes to the ATP binding site; it reads TD. The PUA domain occupies 280–358; the sequence is RGTLVLDDGA…DAIESLLGYS (79 aa).

The protein belongs to the glutamate 5-kinase family.

The protein resides in the cytoplasm. The enzyme catalyses L-glutamate + ATP = L-glutamyl 5-phosphate + ADP. The protein operates within amino-acid biosynthesis; L-proline biosynthesis; L-glutamate 5-semialdehyde from L-glutamate: step 1/2. Functionally, catalyzes the transfer of a phosphate group to glutamate to form L-glutamate 5-phosphate. The polypeptide is Glutamate 5-kinase (Pseudomonas entomophila (strain L48)).